The sequence spans 255 residues: UPF0246 protein Cphy_1568 (255 aa).

It belongs to the UPF0246 family.

The protein is UPF0246 protein Cphy_1568 of Lachnoclostridium phytofermentans (strain ATCC 700394 / DSM 18823 / ISDg) (Clostridium phytofermentans).